The sequence spans 169 residues: Endoribonuclease YbeY (169 aa).

His-128, His-132, and His-138 together coordinate Zn(2+).

The protein belongs to the endoribonuclease YbeY family. Zn(2+) is required as a cofactor.

The protein localises to the cytoplasm. Functionally, single strand-specific metallo-endoribonuclease involved in late-stage 70S ribosome quality control and in maturation of the 3' terminus of the 16S rRNA. The sequence is that of Endoribonuclease YbeY from Cyanothece sp. (strain PCC 7425 / ATCC 29141).